The sequence spans 317 residues: Acetyl-coenzyme A carboxylase carboxyl transferase subunit alpha (317 aa).

Positions 40–293 constitute a CoA carboxyltransferase C-terminal domain; it reads LEVRVREAIV…GDVIASALAE (254 aa).

This sequence belongs to the AccA family. In terms of assembly, acetyl-CoA carboxylase is a heterohexamer composed of biotin carboxyl carrier protein (AccB), biotin carboxylase (AccC) and two subunits each of ACCase subunit alpha (AccA) and ACCase subunit beta (AccD).

The protein localises to the cytoplasm. The enzyme catalyses N(6)-carboxybiotinyl-L-lysyl-[protein] + acetyl-CoA = N(6)-biotinyl-L-lysyl-[protein] + malonyl-CoA. The protein operates within lipid metabolism; malonyl-CoA biosynthesis; malonyl-CoA from acetyl-CoA: step 1/1. In terms of biological role, component of the acetyl coenzyme A carboxylase (ACC) complex. First, biotin carboxylase catalyzes the carboxylation of biotin on its carrier protein (BCCP) and then the CO(2) group is transferred by the carboxyltransferase to acetyl-CoA to form malonyl-CoA. The protein is Acetyl-coenzyme A carboxylase carboxyl transferase subunit alpha of Rhizobium johnstonii (strain DSM 114642 / LMG 32736 / 3841) (Rhizobium leguminosarum bv. viciae).